The primary structure comprises 593 residues: Uroporphyrinogen-III C-methyltransferase (593 aa).

The disordered stretch occupies residues 278–303 (ETSSSPNKKTKQETVTEGVVPPTDEN).

This sequence belongs to the precorrin methyltransferase family.

It carries out the reaction uroporphyrinogen III + 2 S-adenosyl-L-methionine = precorrin-2 + 2 S-adenosyl-L-homocysteine + H(+). Its function is as follows. Siroheme synthase involved in methionine biosynthesis. In Saccharomyces cerevisiae (strain ATCC 204508 / S288c) (Baker's yeast), this protein is Uroporphyrinogen-III C-methyltransferase.